The chain runs to 192 residues: Acireductone dioxygenase 2 (192 aa).

4 residues coordinate Fe(2+): His99, His101, Glu105, and His144. 4 residues coordinate Ni(2+): His99, His101, Glu105, and His144.

Belongs to the acireductone dioxygenase (ARD) family. The cofactor is Fe(2+). Requires Ni(2+) as cofactor.

The protein localises to the cytoplasm. Its subcellular location is the nucleus. The enzyme catalyses 1,2-dihydroxy-5-(methylsulfanyl)pent-1-en-3-one + O2 = 4-methylsulfanyl-2-oxobutanoate + formate + 2 H(+). It catalyses the reaction 1,2-dihydroxy-5-(methylsulfanyl)pent-1-en-3-one + O2 = 3-(methylsulfanyl)propanoate + CO + formate + 2 H(+). It participates in amino-acid biosynthesis; L-methionine biosynthesis via salvage pathway; L-methionine from S-methyl-5-thio-alpha-D-ribose 1-phosphate: step 5/6. Catalyzes 2 different reactions between oxygen and the acireductone 1,2-dihydroxy-3-keto-5-methylthiopentene (DHK-MTPene) depending upon the metal bound in the active site. Fe-containing acireductone dioxygenase (Fe-ARD) produces formate and 2-keto-4-methylthiobutyrate (KMTB), the alpha-ketoacid precursor of methionine in the methionine recycle pathway. Ni-containing acireductone dioxygenase (Ni-ARD) produces methylthiopropionate, carbon monoxide and formate, and does not lie on the methionine recycle pathway. The protein is Acireductone dioxygenase 2 (ARD2) of Arabidopsis thaliana (Mouse-ear cress).